The following is a 288-amino-acid chain: MAGAKEIRTKIASVRNTQKITKAMEMVATSKMRKTQERMAAGRPYSETIRKVISHIAKGSIGYKHPFLIERDVKKVGYLVISTDRGLCGGLNINLFKTTLNEFKAWKDKDVSVELGLVGSKGVSFYQSIGLKVRAHITGLGDSPEMERIVGAVNEMINAYRNGEVDMVCIAYNRFENTMSQKTVIAQLLPLPKLENDELETKCSWDYLYEPNPQVLLDSLLIRYLETQVYQAVVDNLASEQAARMVAMKAATDNAGALIDELQLVYNKARQASITNELNEIVAGAAAI.

This sequence belongs to the ATPase gamma chain family. As to quaternary structure, F-type ATPases have 2 components, CF(1) - the catalytic core - and CF(0) - the membrane proton channel. CF(1) has five subunits: alpha(3), beta(3), gamma(1), delta(1), epsilon(1). CF(0) has three main subunits: a, b and c.

The protein localises to the cell inner membrane. Produces ATP from ADP in the presence of a proton gradient across the membrane. The gamma chain is believed to be important in regulating ATPase activity and the flow of protons through the CF(0) complex. The sequence is that of ATP synthase gamma chain from Haemophilus ducreyi (strain 35000HP / ATCC 700724).